The sequence spans 429 residues: tRNA-2-methylthio-N(6)-dimethylallyladenosine synthase (429 aa).

Residues 1 to 110 enclose the MTTase N-terminal domain; that stretch reads MKFFIKTYGC…IPEAVELSIK (110 aa). Residues Cys-10, Cys-46, Cys-75, Cys-146, Cys-150, and Cys-153 each contribute to the [4Fe-4S] cluster site. A Radical SAM core domain is found at 132 to 364; sequence RNSKHHAWIT…NLQKEINKML (233 aa). The TRAM domain occupies 366–427; the sequence is ESYLDKTVEV…AGPLYGDIIK (62 aa).

It belongs to the methylthiotransferase family. MiaB subfamily. Monomer. [4Fe-4S] cluster is required as a cofactor.

It is found in the cytoplasm. The enzyme catalyses N(6)-dimethylallyladenosine(37) in tRNA + (sulfur carrier)-SH + AH2 + 2 S-adenosyl-L-methionine = 2-methylsulfanyl-N(6)-dimethylallyladenosine(37) in tRNA + (sulfur carrier)-H + 5'-deoxyadenosine + L-methionine + A + S-adenosyl-L-homocysteine + 2 H(+). Catalyzes the methylthiolation of N6-(dimethylallyl)adenosine (i(6)A), leading to the formation of 2-methylthio-N6-(dimethylallyl)adenosine (ms(2)i(6)A) at position 37 in tRNAs that read codons beginning with uridine. The polypeptide is tRNA-2-methylthio-N(6)-dimethylallyladenosine synthase (Thermosipho africanus (strain TCF52B)).